Reading from the N-terminus, the 526-residue chain is Lycopene epsilon cyclase, chloroplastic (526 aa).

Residue 108-136 coordinates NAD(+); the sequence is LVVIGCGPAGLALAAESAKLGLNVGLVGP. The next 2 helical transmembrane spans lie at 443-463 and 477-497; these read FFLF…RSFF and FLGS…MFII.

Belongs to the lycopene cyclase family.

The protein localises to the plastid. It is found in the chloroplast membrane. The enzyme catalyses a carotenoid psi-end group = a carotenoid epsilon-end group. Its pathway is carotenoid biosynthesis; alpha-zeacarotene biosynthesis. The protein operates within carotenoid biosynthesis; delta-carotene biosynthesis. Its function is as follows. Catalyzes the single cyclization reaction which converts lycopene to delta-carotene and neurosporene to alpha-zeacarotene. Required for lutein biosynthesis. This Solanum lycopersicum (Tomato) protein is Lycopene epsilon cyclase, chloroplastic.